The following is a 184-amino-acid chain: Peptidoglycan-recognition protein SC2 (184 aa).

The N-terminal stretch at 1–20 (MANKALILLAVLFCAQAVLG) is a signal peptide. An N-acetylmuramoyl-L-alanine amidase domain is found at 45–169 (SYAVIHHTAG…RQVGSTECPG (125 aa)). Position 50 (His-50) interacts with Zn(2+). A disulfide bridge connects residues Cys-57 and Cys-63. Zn(2+) is bound by residues His-159 and Cys-167.

This sequence belongs to the N-acetylmuramoyl-L-alanine amidase 2 family. Requires Zn(2+) as cofactor.

It is found in the secreted. It catalyses the reaction Hydrolyzes the link between N-acetylmuramoyl residues and L-amino acid residues in certain cell-wall glycopeptides.. Functionally, N-acetylmuramyl-L-alanine amidase involved in innate immunity by degrading bacterial peptidoglycans (PGN). Probably plays a scavenger role by digesting biologically active PGN into biologically inactive fragments. Has no direct bacteriolytic activity. The sequence is that of Peptidoglycan-recognition protein SC2 (PGRP-SC2) from Drosophila simulans (Fruit fly).